A 303-amino-acid chain; its full sequence is Taste receptor type 2 member 13 (303 aa).

Topologically, residues Met1 to Ser7 are extracellular. Residues Ile8 to Val28 traverse the membrane as a helical segment. Residues Leu29–Arg55 lie on the Cytoplasmic side of the membrane. The chain crosses the membrane as a helical span at residues Ile56–Phe76. Over Val77–Met85 the chain is Extracellular. A helical membrane pass occupies residues Ile86 to Phe106. Topologically, residues Tyr107–Lys128 are cytoplasmic. A helical transmembrane segment spans residues Val129–Asn149. Over Ile150–Thr184 the chain is Extracellular. Asn162 and Asn166 each carry an N-linked (GlcNAc...) asparagine glycan. A helical membrane pass occupies residues Met185 to Leu205. Residues Gln206 to Lys232 lie on the Cytoplasmic side of the membrane. Residues Ile233–Ile253 form a helical membrane-spanning segment. Topologically, residues Ser254 to Ala261 are extracellular. A helical transmembrane segment spans residues Ile262 to Ile282. The Cytoplasmic segment spans residues Leu283–Arg303.

The protein belongs to the G-protein coupled receptor T2R family.

It is found in the membrane. Functionally, receptor that may play a role in the perception of bitterness and is gustducin-linked. May play a role in sensing the chemical composition of the gastrointestinal content. The activity of this receptor may stimulate alpha gustducin, mediate PLC-beta-2 activation and lead to the gating of TRPM5. This Pongo pygmaeus (Bornean orangutan) protein is Taste receptor type 2 member 13 (TAS2R13).